The sequence spans 330 residues: Free fatty acid receptor 2 (330 aa).

Topologically, residues 1–8 (MTPDWHSS) are extracellular. Residues 9 to 29 (LILTAYILIFLTGLPANLLAL) form a helical membrane-spanning segment. Topologically, residues 30 to 43 (RAFMGRVRQPQPAP) are cytoplasmic. Residues 44-64 (VHILLLNLTLADLLLLLLLPF) traverse the membrane as a helical segment. The Extracellular portion of the chain corresponds to 65-79 (RIVEAASNFRWYLPK). Residues 80 to 100 (IVCALTGFGFYSSIYCSTWLL) traverse the membrane as a helical segment. Topologically, residues 101–126 (AGISMERYLGVAFPVQYKLSRRPLYG) are cytoplasmic. A helical transmembrane segment spans residues 127–147 (VIAALVAWIMSFGHCTIVIIV). Over 148–184 (QYLNSTEQVGTENQITCYENFTQEQLDVVLPVRLELC) the chain is Extracellular. N-linked (GlcNAc...) asparagine glycans are attached at residues Asn151 and Asn167. A helical membrane pass occupies residues 185 to 205 (LVLFFVPMAVTIFCYWRFVWI). Topologically, residues 206–219 (MLTQPHVGAQRRRR) are cytoplasmic. Residues 220–240 (AVGLAVVTLLNFLVCFGPYNM) traverse the membrane as a helical segment. Residues 241 to 255 (SHLVGFYLRQSPSWR) lie on the Extracellular side of the membrane. The chain crosses the membrane as a helical span at residues 256–276 (VEAVVFSSLNASLDPLLFYFS). At 277–330 (SSVVRRAFGKGLLLIRNPASSMLGRGAKETVEGTKMDRGGSQAEGVQSSEFVTE) the chain is on the cytoplasmic side. Positions 306 to 330 (TVEGTKMDRGGSQAEGVQSSEFVTE) are disordered. The span at 320 to 330 (EGVQSSEFVTE) shows a compositional bias: polar residues.

Belongs to the G-protein coupled receptor 1 family. As to quaternary structure, interacts with FCN1 (via Fibrinogen C-terminal domain). In terms of tissue distribution, highly expressed in hematopoietic tissues, such as spleen and bone marrow, with highest levels in a subset of immune cells, including monocytes or neutrophils. Expressed in adipose tissues with high expression in differentiating adipocytes. Expressed by intestinal endocrine cells.

The protein localises to the cell membrane. G protein-coupled receptor that is activated by a major product of dietary fiber digestion, the short chain fatty acids (SCFAs), and that plays a role in the regulation of whole-body energy homeostasis and in intestinal immunity. In omnivorous mammals, the short chain fatty acids acetate, propionate and butyrate are produced primarily by the gut microbiome that metabolizes dietary fibers. SCFAs serve as a source of energy but also act as signaling molecules. That G protein-coupled receptor is probably coupled to the pertussis toxin-sensitive, G(i/o)-alpha family of G proteins but also to the Gq family. Its activation results in the formation of inositol 1,4,5-trisphosphate, the mobilization of intracellular calcium, the phosphorylation of the MAPK3/ERK1 and MAPK1/ERK2 kinases and the inhibition of intracellular cAMP accumulation. May play a role in glucose homeostasis by regulating the secretion of GLP-1, in response to short-chain fatty acids accumulating in the intestine. May also regulate the production of LEP/Leptin, a hormone acting on the central nervous system to inhibit food intake. Finally, may also regulate whole-body energy homeostasis through adipogenesis regulating both differentiation and lipid storage of adipocytes. In parallel to its role in energy homeostasis, may also mediate the activation of the inflammatory and immune responses by SCFA in the intestine, regulating the rapid production of chemokines and cytokines. May also play a role in the resolution of the inflammatory response and control chemotaxis in neutrophils. In addition to SCFAs, may also be activated by the extracellular lectin FCN1 in a process leading to activation of monocytes and inducing the secretion of interleukin-8/IL-8 in response to the presence of microbes. This is Free fatty acid receptor 2 (Ffar2) from Mus musculus (Mouse).